A 787-amino-acid polypeptide reads, in one-letter code: LPS-assembly protein LptD (787 aa).

The N-terminal stretch at 1–24 (MKKSFPTLLATLVWSALYSQHALA) is a signal peptide.

This sequence belongs to the LptD family. As to quaternary structure, component of the lipopolysaccharide transport and assembly complex. Interacts with LptE and LptA.

Its subcellular location is the cell outer membrane. Together with LptE, is involved in the assembly of lipopolysaccharide (LPS) at the surface of the outer membrane. This is LPS-assembly protein LptD from Pectobacterium atrosepticum (strain SCRI 1043 / ATCC BAA-672) (Erwinia carotovora subsp. atroseptica).